We begin with the raw amino-acid sequence, 421 residues long: UDP-N-acetylglucosamine 1-carboxyvinyltransferase (421 aa).

Phosphoenolpyruvate is bound at residue 22–23 (KN). R93 contacts UDP-N-acetyl-alpha-D-glucosamine. The active-site Proton donor is C117. Residue C117 is modified to 2-(S-cysteinyl)pyruvic acid O-phosphothioketal. Residues 122–126 (RPVDL), D308, and L330 contribute to the UDP-N-acetyl-alpha-D-glucosamine site.

This sequence belongs to the EPSP synthase family. MurA subfamily.

It localises to the cytoplasm. The catalysed reaction is phosphoenolpyruvate + UDP-N-acetyl-alpha-D-glucosamine = UDP-N-acetyl-3-O-(1-carboxyvinyl)-alpha-D-glucosamine + phosphate. The protein operates within cell wall biogenesis; peptidoglycan biosynthesis. Cell wall formation. Adds enolpyruvyl to UDP-N-acetylglucosamine. The protein is UDP-N-acetylglucosamine 1-carboxyvinyltransferase of Wolinella succinogenes (strain ATCC 29543 / DSM 1740 / CCUG 13145 / JCM 31913 / LMG 7466 / NCTC 11488 / FDC 602W) (Vibrio succinogenes).